Here is a 543-residue protein sequence, read N- to C-terminus: tRNA (guanine(37)-N(1))-methyltransferase (543 aa).

A mitochondrion-targeting transit peptide spans 1 to 59; the sequence is MLKSLCFVIRPAIVSRPQFRLPTIARLSLRQFQNQPQSVGFFTMAPLETRALALSPSAT. S-adenosyl-L-methionine contacts are provided by residues histidine 282, 320–321, and 348–349; these read DL and DG. Residues 366 to 405 form a disordered region; it reads DPAPPPKVSNRQRDREAKEARRKREQAKAAGQPVTETAPM. Asparagine 431 is an S-adenosyl-L-methionine binding site.

It belongs to the class I-like SAM-binding methyltransferase superfamily. TRM5/TYW2 family. Monomer.

The protein localises to the mitochondrion matrix. It localises to the nucleus. It is found in the cytoplasm. The enzyme catalyses guanosine(37) in tRNA + S-adenosyl-L-methionine = N(1)-methylguanosine(37) in tRNA + S-adenosyl-L-homocysteine + H(+). Its function is as follows. Specifically methylates the N1 position of guanosine-37 in various cytoplasmic and mitochondrial tRNAs. Methylation is not dependent on the nature of the nucleoside 5' of the target nucleoside. This is the first step in the biosynthesis of wybutosine (yW), a modified base adjacent to the anticodon of tRNAs and required for accurate decoding. The polypeptide is tRNA (guanine(37)-N(1))-methyltransferase (Cryptococcus neoformans var. neoformans serotype D (strain JEC21 / ATCC MYA-565) (Filobasidiella neoformans)).